Reading from the N-terminus, the 200-residue chain is ATP-dependent Clp protease proteolytic subunit (200 aa).

Serine 104 functions as the Nucleophile in the catalytic mechanism. The active site involves histidine 129.

The protein belongs to the peptidase S14 family. As to quaternary structure, fourteen ClpP subunits assemble into 2 heptameric rings which stack back to back to give a disk-like structure with a central cavity, resembling the structure of eukaryotic proteasomes.

Its subcellular location is the cytoplasm. The enzyme catalyses Hydrolysis of proteins to small peptides in the presence of ATP and magnesium. alpha-casein is the usual test substrate. In the absence of ATP, only oligopeptides shorter than five residues are hydrolyzed (such as succinyl-Leu-Tyr-|-NHMec, and Leu-Tyr-Leu-|-Tyr-Trp, in which cleavage of the -Tyr-|-Leu- and -Tyr-|-Trp bonds also occurs).. Its function is as follows. Cleaves peptides in various proteins in a process that requires ATP hydrolysis. Has a chymotrypsin-like activity. Plays a major role in the degradation of misfolded proteins. The protein is ATP-dependent Clp protease proteolytic subunit of Rubrobacter xylanophilus (strain DSM 9941 / JCM 11954 / NBRC 16129 / PRD-1).